The sequence spans 100 residues: Small ribosomal subunit protein uS14m (100 aa).

This sequence belongs to the universal ribosomal protein uS14 family.

It is found in the mitochondrion. The sequence is that of Small ribosomal subunit protein uS14m (RPS14) from Vicia faba (Broad bean).